The chain runs to 231 residues: Large ribosomal subunit protein uL1 (231 aa).

Belongs to the universal ribosomal protein uL1 family. As to quaternary structure, part of the 50S ribosomal subunit.

Binds directly to 23S rRNA. The L1 stalk is quite mobile in the ribosome, and is involved in E site tRNA release. Functionally, protein L1 is also a translational repressor protein, it controls the translation of the L11 operon by binding to its mRNA. This chain is Large ribosomal subunit protein uL1, found in Azoarcus sp. (strain BH72).